Consider the following 294-residue polypeptide: Pyridoxal 5'-phosphate synthase subunit PdxS (294 aa).

A D-ribose 5-phosphate-binding site is contributed by Asp24. Catalysis depends on Lys81, which acts as the Schiff-base intermediate with D-ribose 5-phosphate. A D-ribose 5-phosphate-binding site is contributed by Gly153. D-glyceraldehyde 3-phosphate is bound at residue Arg165. D-ribose 5-phosphate-binding positions include Gly214 and 235 to 236; that span reads GS.

Belongs to the PdxS/SNZ family. As to quaternary structure, homohexamer and homododecamer. In the presence of PdxT, forms a dodecamer of heterodimers.

It carries out the reaction aldehydo-D-ribose 5-phosphate + D-glyceraldehyde 3-phosphate + L-glutamine = pyridoxal 5'-phosphate + L-glutamate + phosphate + 3 H2O + H(+). Its pathway is cofactor biosynthesis; pyridoxal 5'-phosphate biosynthesis. Its function is as follows. Catalyzes the formation of pyridoxal 5'-phosphate from ribose 5-phosphate (RBP), glyceraldehyde 3-phosphate (G3P) and ammonia. The ammonia is provided by the PdxT subunit. Can also use ribulose 5-phosphate and dihydroxyacetone phosphate as substrates, resulting from enzyme-catalyzed isomerization of RBP and G3P, respectively. The chain is Pyridoxal 5'-phosphate synthase subunit PdxS from Bacillus subtilis (strain 168).